We begin with the raw amino-acid sequence, 504 residues long: Maturase K (504 aa).

The protein belongs to the intron maturase 2 family. MatK subfamily.

It is found in the plastid. The protein resides in the chloroplast. Its function is as follows. Usually encoded in the trnK tRNA gene intron. Probably assists in splicing its own and other chloroplast group II introns. The chain is Maturase K from Ochroma pyramidale (Balsa).